We begin with the raw amino-acid sequence, 403 residues long: Dynactin subunit 2-A (403 aa).

Positions 1–26 (MADPKYADLPGIARNEPDVYETSDLP) are disordered. Residues 99 to 132 (PQQKYQRLLHEVQELTQEVEKTQSTVKESAAEEK) adopt a coiled-coil conformation. A disordered region spans residues 183–203 (AAKTRKNPEGKSPAKGPGPDT). Residues 381 to 401 (KENLATVEDNFSNIDGRIKKL) adopt a coiled-coil conformation.

It belongs to the dynactin subunit 2 family. In terms of assembly, subunit of dynactin, a multiprotein complex part of a tripartite complex with dynein and a adapter, such as BICDL1, BICD2 or HOOK3. The dynactin complex is built around ACTR1A/ACTB filament and consists of an actin-related filament composed of a shoulder domain, a pointed end and a barbed end. Its length is defined by its flexible shoulder domain. The soulder is composed of 2 DCTN1 subunits, 4 DCTN2 and 2 DCTN3.

It is found in the cytoplasm. Its subcellular location is the cytoskeleton. It localises to the microtubule organizing center. The protein localises to the centrosome. The protein resides in the membrane. Its function is as follows. Part of the dynactin complex that activates the molecular motor dynein for ultra-processive transport along microtubules. In the dynactin soulder domain, binds the ACTR1A filament and acts as a molecular ruler to determine the length. Modulates cytoplasmic dynein binding to an organelle, and plays a role in prometaphase chromosome alignment and spindle organization during mitosis. Involved in anchoring microtubules to centrosomes. In Xenopus laevis (African clawed frog), this protein is Dynactin subunit 2-A (dctn2-a).